Consider the following 117-residue polypeptide: Large ribosomal subunit protein bL20c (117 aa).

This sequence belongs to the bacterial ribosomal protein bL20 family.

It localises to the plastid. It is found in the chloroplast. Binds directly to 23S ribosomal RNA and is necessary for the in vitro assembly process of the 50S ribosomal subunit. It is not involved in the protein synthesizing functions of that subunit. This is Large ribosomal subunit protein bL20c from Lemna minor (Common duckweed).